A 184-amino-acid polypeptide reads, in one-letter code: Ribonuclease HII (184 aa).

Residues 2–184 enclose the RNase H type-2 domain; that stretch reads AKICGIDEAG…KPKLAQSSLF (183 aa). A divalent metal cation contacts are provided by Asp8, Glu9, and Asp95.

Belongs to the RNase HII family. Mn(2+) serves as cofactor. Mg(2+) is required as a cofactor.

It localises to the cytoplasm. It catalyses the reaction Endonucleolytic cleavage to 5'-phosphomonoester.. Endonuclease that specifically degrades the RNA of RNA-DNA hybrids. The polypeptide is Ribonuclease HII (Campylobacter concisus (strain 13826)).